The primary structure comprises 789 residues: Aconitate hydratase, mitochondrial (789 aa).

Residues 1–32 (MFCKISRAPARMGSRIFTQSTLRSFSCAPVAA) constitute a mitochondrion transit peptide. Substrate is bound by residues Q106 and 199 to 201 (DSH). Positions 392, 455, and 458 each coordinate [4Fe-4S] cluster. Residues R481, R486, R613, and 676–677 (SR) each bind substrate.

The protein belongs to the aconitase/IPM isomerase family. As to quaternary structure, monomer. The cofactor is [4Fe-4S] cluster.

The protein resides in the mitochondrion. The catalysed reaction is citrate = D-threo-isocitrate. It functions in the pathway carbohydrate metabolism; tricarboxylic acid cycle; isocitrate from oxaloacetate: step 2/2. Catalyzes the isomerization of citrate to isocitrate via cis-aconitate, a step in the citric acid cycle. In Schizosaccharomyces pombe (strain 972 / ATCC 24843) (Fission yeast), this protein is Aconitate hydratase, mitochondrial.